A 77-amino-acid polypeptide reads, in one-letter code: Large ribosomal subunit protein eL14 (77 aa).

It belongs to the eukaryotic ribosomal protein eL14 family.

The sequence is that of Large ribosomal subunit protein eL14 from Methanococcus maripaludis (strain C5 / ATCC BAA-1333).